Consider the following 443-residue polypeptide: Cell division protein FtsA (443 aa).

It belongs to the FtsA/MreB family. As to quaternary structure, self-interacts. Interacts with FtsZ.

It localises to the cell inner membrane. In terms of biological role, cell division protein that is involved in the assembly of the Z ring. May serve as a membrane anchor for the Z ring. In Agrobacterium fabrum (strain C58 / ATCC 33970) (Agrobacterium tumefaciens (strain C58)), this protein is Cell division protein FtsA.